We begin with the raw amino-acid sequence, 1562 residues long: Phospholipid-transporting ATPase dnf1 (1562 aa).

4 disordered regions span residues 1–38, 55–94, 115–134, and 146–166; these read MKSS…ADDG, LPLG…SDSR, TPST…KKAH, and PLDD…NGRP. Residues 1-275 are Extracellular-facing; that stretch reads MKSSGIAGDS…IAIMQMIPGW (275 aa). Residues 12-21 are compositionally biased toward polar residues; the sequence is GFETNFLNET. Residues 60–69 show a composition bias toward acidic residues; it reads DENELDEIDI. A compositionally biased stretch (basic and acidic residues) spans 71 to 86; sequence GDSKKLDSVEVDESHD. A helical transmembrane segment spans residues 276–296; sequence STTGTYTTIIPLLIFISIAIL. Residues 297–574 are Cytoplasmic-facing; sequence REGFDNYRRY…APSMQKVTNR (278 aa). A disordered region spans residues 347-406; sequence SQESASRSTIRSTDEREPERTSEDPPQLPPSPSSPSSPALSVKPNIDPQPPLYNSTLTTT. A compositionally biased stretch (basic and acidic residues) spans 358-369; the sequence is STDEREPERTSE. Positions 372–381 are enriched in pro residues; that stretch reads PQLPPSPSSP. The chain crosses the membrane as a helical span at residues 575–595; sequence IVIFIFALVVSMAIYCTAAYF. Topologically, residues 596 to 614 are extracellular; that stretch reads VWQKKVERKLWYLTNSKLS. Residues 615–635 form a helical membrane-spanning segment; the sequence is FVPILVSFIILYNTMVPISLY. At 636–1309 the chain is on the cytoplasmic side; sequence VSMEIIRVFQ…YILGTFYKEQ (674 aa). D684 acts as the 4-aspartylphosphate intermediate in catalysis. Positions 684, 685, 686, 794, 843, 845, 848, and 866 each coordinate ATP. D684 contacts Mg(2+). T686 is a binding site for Mg(2+). Position 954 is a phosphoserine (S954). Residues R1022, T1023, T1102, G1103, D1104, 1181 to 1188, R1216, and K1222 contribute to the ATP site; that span reads VIVIDGST. D1243 lines the Mg(2+) pocket. ATP-binding residues include N1246 and D1247. Residues 1310–1330 traverse the membrane as a helical segment; that stretch reads FFFLMQAIMQPFVGYTGQSLY. The Extracellular portion of the chain corresponds to 1331–1332; it reads ES. The chain crosses the membrane as a helical span at residues 1333–1353; that stretch reads WGLTCFNTLFSSLCVIGLGIF. At 1354–1381 the chain is on the cytoplasmic side; the sequence is EKDLSASTVIAVPELYQKGINNEAFNWR. A helical transmembrane segment spans residues 1382 to 1402; sequence VYFGWCSIAFIQAFLVFYVTY. Topologically, residues 1403-1414 are extracellular; that stretch reads SLFGMKELNDNN. Residues 1415–1435 traverse the membrane as a helical segment; that stretch reads IFAYGQLIFTAAIFIMNFKLV. Over 1436-1443 the chain is Cytoplasmic; the sequence is FIEMQYIN. A helical membrane pass occupies residues 1444–1464; that stretch reads IISIIVLVLTSLAWFLFNIFI. The Extracellular portion of the chain corresponds to 1465–1490; the sequence is SEHYPDKNLYLARSQFLHHFGKNPSW. The chain crosses the membrane as a helical span at residues 1491-1511; the sequence is WLTMLFVMVCALTIDIVAQML. Over 1512–1562 the chain is Cytoplasmic; that stretch reads RRTLRPTDTDIFVEMENDAFVRSRFEQESGEFLQANAPSVDEIEQYLKSRD.

It belongs to the cation transport ATPase (P-type) (TC 3.A.3) family. Type IV subfamily. Requires Mg(2+) as cofactor.

The protein localises to the golgi apparatus. It is found in the trans-Golgi network membrane. It localises to the endosome membrane. The catalysed reaction is ATP + H2O + phospholipidSide 1 = ADP + phosphate + phospholipidSide 2.. It carries out the reaction a 1,2-diacyl-sn-glycero-3-phosphocholine(out) + ATP + H2O = a 1,2-diacyl-sn-glycero-3-phosphocholine(in) + ADP + phosphate + H(+). The enzyme catalyses a 1,2-diacyl-sn-glycero-3-phosphoethanolamine(out) + ATP + H2O = a 1,2-diacyl-sn-glycero-3-phosphoethanolamine(in) + ADP + phosphate + H(+). Its function is as follows. Catalytic component of a P4-ATPase flippase complex which catalyzes the hydrolysis of ATP coupled to the transport of phosphatidylcholine and small amounts of phosphatidylethanolamine from the lumen to the cytosolic leaflet of the trans-Golgi network and ensures the maintenance of asymmetric distribution of phospholipids. May be involved in transport from early endosomes to the trans-Golgi network (TGN). In Schizosaccharomyces pombe (strain 972 / ATCC 24843) (Fission yeast), this protein is Phospholipid-transporting ATPase dnf1.